Reading from the N-terminus, the 440-residue chain is uncharacterized protein (440 aa).

Transmembrane regions (helical) follow at residues 1 to 21 (MLLV…QLYR), 29 to 49 (TVFI…SAFE), 70 to 90 (LLQM…IARI), 101 to 121 (VGVL…GIAM), 179 to 199 (TSII…LSLG), 226 to 246 (FVIR…AATS), 258 to 278 (IVAS…LLFF), 343 to 363 (IYPA…PFSF), 366 to 386 (ILTL…VGGG), and 389 to 409 (FAAI…GLLI).

It belongs to the dicarboxylate/amino acid:cation symporter (DAACS) (TC 2.A.23) family.

The protein localises to the cell membrane. This is an uncharacterized protein from Haemophilus influenzae (strain ATCC 51907 / DSM 11121 / KW20 / Rd).